A 180-amino-acid chain; its full sequence is Nascent polypeptide-associated complex subunit alpha (180 aa).

Residues 16–80 enclose the NAC-A/B domain; that stretch reads SKNEKKAREL…AKVDDMNKRI (65 aa). The interval 81-113 is disordered; the sequence is AEAQQQQAQQDALSKAAGETGEAGEEDKSQDAI. The segment covering 82–100 has biased composition (low complexity); sequence EAQQQQAQQDALSKAAGET. The region spanning 142 to 179 is the UBA domain; it reads LDAKDIDIIVEQTQVSRAKAVKALRVHDGDMVNAIMEL.

The protein belongs to the NAC-alpha family. Part of the nascent polypeptide-associated complex (NAC), consisting of EGD2 and EGD1. NAC associates with ribosomes via EGD1.

The protein localises to the cytoplasm. It is found in the nucleus. In terms of biological role, component of the nascent polypeptide-associated complex (NAC), a dynamic component of the ribosomal exit tunnel, protecting the emerging polypeptides from interaction with other cytoplasmic proteins to ensure appropriate nascent protein targeting. The NAC complex also promotes mitochondrial protein import by enhancing productive ribosome interactions with the outer mitochondrial membrane and blocks the inappropriate interaction of ribosomes translating non-secretory nascent polypeptides with translocation sites in the membrane of the endoplasmic reticulum. EGD2 may also be involved in transcription regulation. The polypeptide is Nascent polypeptide-associated complex subunit alpha (EGD2) (Debaryomyces hansenii (strain ATCC 36239 / CBS 767 / BCRC 21394 / JCM 1990 / NBRC 0083 / IGC 2968) (Yeast)).